A 438-amino-acid polypeptide reads, in one-letter code: Transmembrane protein 184C (438 aa).

Transmembrane regions (helical) follow at residues 17–37, 48–68, 86–106, 176–196, 212–232, 254–274, and 287–307; these read LAVVLYLLSIVVAVPLCVWEL, AWFIAGIFLLLTIPISLWVIL, ILWMVPIYSLDSWIALKYPSI, VLQYTVVRPFTTIIALVCELL, YLVIINNMSQLFAMYCLLLFY, VVFVSFWQAVVIALLVKVGVI, and AVATGLQDFIICIEMFLAAIA. A disordered region spans residues 358-438; sequence PRKKFFPEDQ…EEPSEKPVAS (81 aa). Low complexity-rich tracts occupy residues 374 to 390 and 404 to 413; these read SLLSSSSQDALSVASSV and TVTPQTTPTT. The segment covering 426-438 has biased composition (basic and acidic residues); the sequence is GVREEPSEKPVAS.

Belongs to the TMEM184 family.

The protein resides in the membrane. Its function is as follows. Possible tumor suppressor which may play a role in cell growth. The polypeptide is Transmembrane protein 184C (TMEM184C) (Bos taurus (Bovine)).